Consider the following 833-residue polypeptide: DNA gyrase subunit A (833 aa).

The region spanning 34–500 (LPDVRDGLKP…AGDVRDIEDI (467 aa)) is the Topo IIA-type catalytic domain. Y122 acts as the O-(5'-phospho-DNA)-tyrosine intermediate in catalysis. The short motif at 527–533 (QKRGGQG) is the GyrA-box element.

It belongs to the type II topoisomerase GyrA/ParC subunit family. In terms of assembly, heterotetramer, composed of two GyrA and two GyrB chains. In the heterotetramer, GyrA contains the active site tyrosine that forms a transient covalent intermediate with DNA, while GyrB binds cofactors and catalyzes ATP hydrolysis.

It is found in the cytoplasm. The catalysed reaction is ATP-dependent breakage, passage and rejoining of double-stranded DNA.. A type II topoisomerase that negatively supercoils closed circular double-stranded (ds) DNA in an ATP-dependent manner to modulate DNA topology and maintain chromosomes in an underwound state. Negative supercoiling favors strand separation, and DNA replication, transcription, recombination and repair, all of which involve strand separation. Also able to catalyze the interconversion of other topological isomers of dsDNA rings, including catenanes and knotted rings. Type II topoisomerases break and join 2 DNA strands simultaneously in an ATP-dependent manner. The polypeptide is DNA gyrase subunit A (Chlamydia muridarum (strain MoPn / Nigg)).